A 267-amino-acid chain; its full sequence is MPELPEVETTRRRLRPLVLGQTLRQVVHRDPARYRNTALAEGRRILEVDRRGKFLLFALEGGVELVAHLGMTGGFRLEPTPHTRAALVLEGRTLYFHDPRRFGRLFGVRRGDYREIPLLLRLGPEPLSEAFAFPGFFRGLKESARPLKALLLDQRLAAGVGNIYADEALFRARLSPFRPARSLTEEEARRLYRALREVLAEAVELGGSTLSDQSYRQPDGLPGGFQTRHAVYGREGLPCPACGRPVERRVVAGRGTHFCPTCQGEGP.

The Schiff-base intermediate with DNA role is filled by proline 2. Catalysis depends on glutamate 3, which acts as the Proton donor. The active-site Proton donor; for beta-elimination activity is the lysine 53. Positions 82 and 100 each coordinate DNA. The FPG-type zinc finger occupies 230 to 264 (AVYGREGLPCPACGRPVERRVVAGRGTHFCPTCQG). The Proton donor; for delta-elimination activity role is filled by arginine 254.

It belongs to the FPG family. In terms of assembly, monomer. The cofactor is Zn(2+).

It carries out the reaction Hydrolysis of DNA containing ring-opened 7-methylguanine residues, releasing 2,6-diamino-4-hydroxy-5-(N-methyl)formamidopyrimidine.. It catalyses the reaction 2'-deoxyribonucleotide-(2'-deoxyribose 5'-phosphate)-2'-deoxyribonucleotide-DNA = a 3'-end 2'-deoxyribonucleotide-(2,3-dehydro-2,3-deoxyribose 5'-phosphate)-DNA + a 5'-end 5'-phospho-2'-deoxyribonucleoside-DNA + H(+). Involved in base excision repair of DNA damaged by oxidation or by mutagenic agents. Acts as a DNA glycosylase that recognizes and removes damaged bases. Has a preference for oxidized purines, such as 7,8-dihydro-8-oxoguanine (8-oxoG). Has AP (apurinic/apyrimidinic) lyase activity and introduces nicks in the DNA strand. Cleaves the DNA backbone by beta-delta elimination to generate a single-strand break at the site of the removed base with both 3'- and 5'-phosphates. The polypeptide is Formamidopyrimidine-DNA glycosylase (Thermus thermophilus (strain ATCC BAA-163 / DSM 7039 / HB27)).